Here is a 796-residue protein sequence, read N- to C-terminus: YY1-associated protein 1 (796 aa).

Disordered regions lie at residues 1 to 45 (MEEE…ATPS) and 463 to 488 (IQPSPSLQPSFNPGKTPAQSTHSEAP). Over residues 23–36 (PPDKREGSAVDPGK) the composition is skewed to basic and acidic residues. Low complexity predominate over residues 463–472 (IQPSPSLQPS). A compositionally biased stretch (polar residues) spans 473-485 (FNPGKTPAQSTHS). Ser724 is modified (phosphoserine). The interval 755-776 (RQALEPLPQGIQESLNNSSPGD) is disordered. The segment covering 765-774 (IQESLNNSSP) has biased composition (polar residues).

Interacts with YY1. Interacts with MAD2L2. Interacts with INO80. As to expression, ubiquitous. Detected in small intestine, skeletal muscle, lung, pancreas, brain, stomach, spleen, colon and heart. Detected at very low levels in healthy liver. Highly expressed in most liver carcinomas.

It localises to the cytoplasm. It is found in the nucleus. Its subcellular location is the nucleoplasm. The protein localises to the nucleolus. Its function is as follows. Associates with the INO80 chromatin remodeling complex, which is responsible for transcriptional regulation, DNA repair, and replication. Enhances transcription activation by YY1. Plays a role in cell cycle regulation. This Homo sapiens (Human) protein is YY1-associated protein 1.